Consider the following 85-residue polypeptide: Small ribosomal subunit protein uS17 (85 aa).

The protein belongs to the universal ribosomal protein uS17 family. As to quaternary structure, part of the 30S ribosomal subunit.

Functionally, one of the primary rRNA binding proteins, it binds specifically to the 5'-end of 16S ribosomal RNA. This Desulforapulum autotrophicum (strain ATCC 43914 / DSM 3382 / VKM B-1955 / HRM2) (Desulfobacterium autotrophicum) protein is Small ribosomal subunit protein uS17.